The primary structure comprises 117 residues: Ribosome-binding factor A (117 aa).

This sequence belongs to the RbfA family. In terms of assembly, monomer. Binds 30S ribosomal subunits, but not 50S ribosomal subunits or 70S ribosomes.

It localises to the cytoplasm. Functionally, one of several proteins that assist in the late maturation steps of the functional core of the 30S ribosomal subunit. Associates with free 30S ribosomal subunits (but not with 30S subunits that are part of 70S ribosomes or polysomes). Required for efficient processing of 16S rRNA. May interact with the 5'-terminal helix region of 16S rRNA. The protein is Ribosome-binding factor A of Syntrophobacter fumaroxidans (strain DSM 10017 / MPOB).